Reading from the N-terminus, the 202-residue chain is Ras-related protein Rab-18 (202 aa).

Residues Ser18, Gly21, Lys22, Ser23, Ser24, Asp35, Pro36, Thr41, Gly67, Lys124, Asp126, and Ala153 each coordinate GTP. An Effector region motif is present at residues 38–46; sequence QAATIGVDF. S-geranylgeranyl cysteine attachment occurs at residues Cys198 and Cys200.

This sequence belongs to the small GTPase superfamily. Rab family.

It is found in the cell membrane. It catalyses the reaction GTP + H2O = GDP + phosphate + H(+). Functionally, the small GTPases Rab are key regulators of intracellular membrane trafficking, from the formation of transport vesicles to their fusion with membranes. Rabs cycle between an inactive GDP-bound form and an active GTP-bound form that is able to recruit to membranes different sets of downstream effectors directly responsible for vesicle formation, movement, tethering and fusion. This Lymnaea stagnalis (Great pond snail) protein is Ras-related protein Rab-18 (RAB18A).